The chain runs to 275 residues: 4-hydroxy-3-methylbut-2-enyl diphosphate reductase (275 aa).

Residue C12 participates in [4Fe-4S] cluster binding. (2E)-4-hydroxy-3-methylbut-2-enyl diphosphate-binding residues include H40 and H70. Dimethylallyl diphosphate contacts are provided by H40 and H70. Isopentenyl diphosphate-binding residues include H40 and H70. [4Fe-4S] cluster is bound at residue C92. H119 is a binding site for (2E)-4-hydroxy-3-methylbut-2-enyl diphosphate. Dimethylallyl diphosphate is bound at residue H119. H119 serves as a coordination point for isopentenyl diphosphate. Catalysis depends on E121, which acts as the Proton donor. T151 contributes to the (2E)-4-hydroxy-3-methylbut-2-enyl diphosphate binding site. C181 serves as a coordination point for [4Fe-4S] cluster. (2E)-4-hydroxy-3-methylbut-2-enyl diphosphate contacts are provided by S209, S210, N211, and S251. 4 residues coordinate dimethylallyl diphosphate: S209, S210, N211, and S251. 4 residues coordinate isopentenyl diphosphate: S209, S210, N211, and S251.

Belongs to the IspH family. [4Fe-4S] cluster serves as cofactor.

The catalysed reaction is isopentenyl diphosphate + 2 oxidized [2Fe-2S]-[ferredoxin] + H2O = (2E)-4-hydroxy-3-methylbut-2-enyl diphosphate + 2 reduced [2Fe-2S]-[ferredoxin] + 2 H(+). It carries out the reaction dimethylallyl diphosphate + 2 oxidized [2Fe-2S]-[ferredoxin] + H2O = (2E)-4-hydroxy-3-methylbut-2-enyl diphosphate + 2 reduced [2Fe-2S]-[ferredoxin] + 2 H(+). The protein operates within isoprenoid biosynthesis; dimethylallyl diphosphate biosynthesis; dimethylallyl diphosphate from (2E)-4-hydroxy-3-methylbutenyl diphosphate: step 1/1. It functions in the pathway isoprenoid biosynthesis; isopentenyl diphosphate biosynthesis via DXP pathway; isopentenyl diphosphate from 1-deoxy-D-xylulose 5-phosphate: step 6/6. Its function is as follows. Catalyzes the conversion of 1-hydroxy-2-methyl-2-(E)-butenyl 4-diphosphate (HMBPP) into a mixture of isopentenyl diphosphate (IPP) and dimethylallyl diphosphate (DMAPP). Acts in the terminal step of the DOXP/MEP pathway for isoprenoid precursor biosynthesis. In Thermotoga maritima (strain ATCC 43589 / DSM 3109 / JCM 10099 / NBRC 100826 / MSB8), this protein is 4-hydroxy-3-methylbut-2-enyl diphosphate reductase.